A 316-amino-acid polypeptide reads, in one-letter code: Low affinity immunoglobulin gamma Fc region receptor II-a (316 aa).

Positions 1–35 (MAMETQMSQNVCPRNLWLLQPLTVLLLLASADSQA) are cleaved as a signal peptide. Over 36–216 (APPKAVLKLE…PSVGSSSPVG (181 aa)) the chain is Extracellular. 2 consecutive Ig-like C2-type domains span residues 38-117 (PKAV…VHLT) and 121-203 (EWLV…VTIT). 2 disulfide bridges follow: cysteine 61/cysteine 103 and cysteine 142/cysteine 186. N-linked (GlcNAc...) asparagine glycans are attached at residues asparagine 96, asparagine 170, and asparagine 177. The chain crosses the membrane as a helical span at residues 217–239 (IIVAVVIATAVAAIVAAVVALIY). Residues 240–316 (CRKKRISANS…PPNDHVNSNN (77 aa)) are Cytoplasmic-facing. A phosphotyrosine; by SRC-type Tyr-kinases mark is found at tyrosine 287 and tyrosine 303.

In terms of assembly, interacts with INPP5D/SHIP1 and INPPL1/SHIP2, regulating its function. Interacts with APCS and FGR. Interacts with HCK. Post-translationally, phosphorylated by SRC-type Tyr-kinases such as HCK, LYN, BLK, FYN and SYK.

The protein localises to the cell membrane. Its function is as follows. Binds to the Fc region of immunoglobulins gamma. Low affinity receptor. By binding to IgG it initiates cellular responses against pathogens and soluble antigens. Promotes phagocytosis of opsonized antigens. This chain is Low affinity immunoglobulin gamma Fc region receptor II-a (FCGR2A), found in Pan troglodytes (Chimpanzee).